An 876-amino-acid polypeptide reads, in one-letter code: E3 ubiquitin-protein ligase TRIM71 (876 aa).

The RING-type zinc finger occupies 12–90 (CPLCKEMCGS…ALKLRCPICD (79 aa)). The span at 26–40 (SSNSSTSSSSSQTSG) shows a compositional bias: low complexity. Disordered stretches follow at residues 26-46 (SSNS…GGGG) and 128-192 (KNGR…AALL). A compositionally biased stretch (gly residues) spans 137–148 (PAAGSGAGGGGA). The span at 160–182 (RAAAAASSPAAGSAAPSASSSSS) shows a compositional bias: low complexity. The B box-type 1; atypical zinc finger occupies 200-247 (QGEPRCSSCDEGNAASSRCLDCQEHLCDNCVRAHQRVRLTKDHFIERF). Zn(2+) is bound by residues Cys205, Cys208, Cys229, His233, Cys286, His289, Cys309, and His314. The segment at 281–322 (ERASYCQHHDDEVLHFYCDTCSVPICRECTMGRHVGHSFIYL) adopts a B box-type 2 zinc-finger fold. 2 coiled-coil regions span residues 344–373 (RQAI…SEVK) and 399–434 (QVKA…EEGR). The Filamin repeat unit spans residues 487–588 (SSGAFAPLTK…IENSPFKVVV (102 aa)). 6 NHL repeats span residues 601–644 (GLSF…FKPC), 648–691 (HHKF…FTFE), 695–738 (ILKF…FGPD), 742–785 (LNKY…IHAD), 789–832 (ARFL…FESN), and 836–876 (LCKF…ILVF).

Belongs to the TRIM/RBCC family.

The protein localises to the cytoplasm. It is found in the P-body. It catalyses the reaction S-ubiquitinyl-[E2 ubiquitin-conjugating enzyme]-L-cysteine + [acceptor protein]-L-lysine = [E2 ubiquitin-conjugating enzyme]-L-cysteine + N(6)-ubiquitinyl-[acceptor protein]-L-lysine.. It participates in protein modification; protein ubiquitination. Its function is as follows. E3 ubiquitin-protein ligase that cooperates with the microRNAs (miRNAs) machinery and promotes embryonic stem cells proliferation and maintenance. Binds to miRNAs and participates in post-transcriptional repression of transcripts. Required to maintain proliferation and prevent premature differentiation of neural progenitor cells during early neural development. This Gallus gallus (Chicken) protein is E3 ubiquitin-protein ligase TRIM71 (TRIM71).